The sequence spans 191 residues: MENNKNQWLEIGTIVSARGLKGELKVLSSTDFPERFEIPGKRWLQPPHDPYPQAIELISGKSVAGKNIYIVRLEGIENRNQAETLRGYKLLIMDQELPELEEEEYHVSQLINVQVYHHKTGELLGTVIDLFTTGHDLLEIQLINNSEREAKKTKERKVLIPFVYEIVPVVDLENNRIEINPPKGLLSLGDS.

Positions 102-185 (EEEYHVSQLI…RIEINPPKGL (84 aa)) constitute a PRC barrel domain.

Belongs to the RimM family. As to quaternary structure, binds ribosomal protein uS19.

The protein resides in the cytoplasm. In terms of biological role, an accessory protein needed during the final step in the assembly of 30S ribosomal subunit, possibly for assembly of the head region. Essential for efficient processing of 16S rRNA. May be needed both before and after RbfA during the maturation of 16S rRNA. It has affinity for free ribosomal 30S subunits but not for 70S ribosomes. The chain is Ribosome maturation factor RimM from Crocosphaera subtropica (strain ATCC 51142 / BH68) (Cyanothece sp. (strain ATCC 51142)).